The chain runs to 352 residues: Beta-hexosaminidase (352 aa).

Substrate-binding positions include Asp-74, Arg-82, Arg-149, and 179–180 (KH). Residue His-192 is the Proton donor/acceptor of the active site. Asp-263 (nucleophile) is an active-site residue.

The protein belongs to the glycosyl hydrolase 3 family. NagZ subfamily.

Its subcellular location is the cytoplasm. The enzyme catalyses Hydrolysis of terminal non-reducing N-acetyl-D-hexosamine residues in N-acetyl-beta-D-hexosaminides.. It participates in cell wall biogenesis; peptidoglycan recycling. Functionally, plays a role in peptidoglycan recycling by cleaving the terminal beta-1,4-linked N-acetylglucosamine (GlcNAc) from peptide-linked peptidoglycan fragments, giving rise to free GlcNAc, anhydro-N-acetylmuramic acid and anhydro-N-acetylmuramic acid-linked peptides. This is Beta-hexosaminidase from Bordetella pertussis (strain Tohama I / ATCC BAA-589 / NCTC 13251).